Here is a 426-residue protein sequence, read N- to C-terminus: CAAX prenyl protease 1 homolog (426 aa).

Residues 1-3 (MVN) are Lumenal-facing. A helical transmembrane segment spans residues 4 to 24 (YFIISISFFLLEHFYSFYLNF). The Cytoplasmic segment spans residues 25 to 70 (RQSKLLKNLTKVPEYCKDRITQEDFKKSQEYSKAKLDYKTLTSTIQ). The chain crosses the membrane as a helical span at residues 71–91 (VLTTLLSFYYPVYPYFWNLSL). The Lumenal portion of the chain corresponds to 92–106 (ELAEKIGYPNEIIRS). Residues 107–127 (CFFFAFTVGVSVITEIPFSYY) traverse the membrane as a helical segment. Topologically, residues 128–150 (YQFILEEKFGYNRMTRTLFIKDK) are cytoplasmic. Residues 151 to 171 (IISTLLMIGFGLPILSLAIFI) form a helical membrane-spanning segment. Over 172–178 (INWSGPQ) the chain is Lumenal. The helical transmembrane segment at 179–199 (LWFYCWLLLVAITLLSITIYP) threads the bilayer. Residues 200–294 (TFIQPLFNKF…GHYKMSHTLK (95 aa)) lie on the Cytoplasmic side of the membrane. Histidine 282 is a Zn(2+) binding site. Glutamate 283 is an active-site residue. Residue histidine 286 coordinates Zn(2+). Residues 295 to 315 (QMLLVQVHLVTLLYAFSLLIN) form a helical membrane-spanning segment. Topologically, residues 316-333 (DDQLYQQFGFVSSKDSVL) are lumenal. A helical membrane pass occupies residues 334–354 (VGLTLFMFLYSPIDRIFSLLI). Over 355–426 (NIFSRKYEFQ…KVALYKLKNK (72 aa)) the chain is Cytoplasmic. A Zn(2+)-binding site is contributed by glutamate 362.

This sequence belongs to the peptidase M48B family. Requires Zn(2+) as cofactor.

The protein localises to the endoplasmic reticulum membrane. It carries out the reaction Hydrolyzes the peptide bond -P2-(S-farnesyl or geranylgeranyl)C-P1'-P2'-P3'-COOH where P1' and P2' are amino acids with aliphatic side chains and P3' is any C-terminal residue.. In terms of biological role, proteolytically removes the C-terminal three residues of farnesylated proteins. The sequence is that of CAAX prenyl protease 1 homolog (zmpste24) from Dictyostelium discoideum (Social amoeba).